The primary structure comprises 340 residues: Heat-inducible transcription repressor HrcA (340 aa).

The protein belongs to the HrcA family.

Functionally, negative regulator of class I heat shock genes (grpE-dnaK-dnaJ and groELS operons). Prevents heat-shock induction of these operons. The protein is Heat-inducible transcription repressor HrcA of Burkholderia cenocepacia (strain HI2424).